Reading from the N-terminus, the 92-residue chain is Small ribosomal subunit protein uS19c (92 aa).

Belongs to the universal ribosomal protein uS19 family.

It is found in the plastid. The protein localises to the chloroplast. Functionally, protein S19 forms a complex with S13 that binds strongly to the 16S ribosomal RNA. This chain is Small ribosomal subunit protein uS19c, found in Amborella trichopoda.